The chain runs to 302 residues: Sulfate adenylyltransferase subunit 2 (302 aa).

It belongs to the PAPS reductase family. CysD subfamily. In terms of assembly, heterodimer composed of CysD, the smaller subunit, and CysN.

It carries out the reaction sulfate + ATP + H(+) = adenosine 5'-phosphosulfate + diphosphate. It participates in sulfur metabolism; hydrogen sulfide biosynthesis; sulfite from sulfate: step 1/3. With CysN forms the ATP sulfurylase (ATPS) that catalyzes the adenylation of sulfate producing adenosine 5'-phosphosulfate (APS) and diphosphate, the first enzymatic step in sulfur assimilation pathway. APS synthesis involves the formation of a high-energy phosphoric-sulfuric acid anhydride bond driven by GTP hydrolysis by CysN coupled to ATP hydrolysis by CysD. The polypeptide is Sulfate adenylyltransferase subunit 2 (Sodalis glossinidius (strain morsitans)).